The chain runs to 173 residues: Crossover junction endodeoxyribonuclease RuvC (173 aa).

Residues Asp-8, Glu-67, and Asp-139 contribute to the active site. The Mg(2+) site is built by Asp-8, Glu-67, and Asp-139.

Belongs to the RuvC family. Homodimer which binds Holliday junction (HJ) DNA. The HJ becomes 2-fold symmetrical on binding to RuvC with unstacked arms; it has a different conformation from HJ DNA in complex with RuvA. In the full resolvosome a probable DNA-RuvA(4)-RuvB(12)-RuvC(2) complex forms which resolves the HJ. The cofactor is Mg(2+).

The protein resides in the cytoplasm. It carries out the reaction Endonucleolytic cleavage at a junction such as a reciprocal single-stranded crossover between two homologous DNA duplexes (Holliday junction).. Functionally, the RuvA-RuvB-RuvC complex processes Holliday junction (HJ) DNA during genetic recombination and DNA repair. Endonuclease that resolves HJ intermediates. Cleaves cruciform DNA by making single-stranded nicks across the HJ at symmetrical positions within the homologous arms, yielding a 5'-phosphate and a 3'-hydroxyl group; requires a central core of homology in the junction. The consensus cleavage sequence is 5'-(A/T)TT(C/G)-3'. Cleavage occurs on the 3'-side of the TT dinucleotide at the point of strand exchange. HJ branch migration catalyzed by RuvA-RuvB allows RuvC to scan DNA until it finds its consensus sequence, where it cleaves and resolves the cruciform DNA. The sequence is that of Crossover junction endodeoxyribonuclease RuvC from Vibrio cholerae serotype O1 (strain ATCC 39541 / Classical Ogawa 395 / O395).